Reading from the N-terminus, the 575-residue chain is Sodium/hydrogen exchanger 8 (575 aa).

Helical transmembrane passes span 54–74, 78–98, 117–137, 150–170, 185–205, 255–275, 305–325, 348–368, 373–393, 411–431, and 445–465; these read MTIF…HLLI, LHFL…GAVI, PNMF…YSLH, LFAV…IYFL, FAFG…IFNA, LGYF…TGLI, GLAE…GIVM, VAFL…FSFP, ISFV…NIFP, MFIM…SLHL, and TTII…MPLI. A Phosphothreonine modification is found at Thr504. Phosphoserine is present on residues Ser565 and Ser567.

The protein belongs to the monovalent cation:proton antiporter 1 (CPA1) transporter (TC 2.A.36) family. In terms of tissue distribution, intestine and kidneys.

The protein resides in the golgi apparatus membrane. It localises to the golgi apparatus. It is found in the trans-Golgi network membrane. The protein localises to the endosome. Its subcellular location is the multivesicular body membrane. The protein resides in the apical cell membrane. It localises to the cytoplasmic vesicle. It is found in the secretory vesicle. The protein localises to the acrosome. The enzyme catalyses Na(+)(in) + H(+)(out) = Na(+)(out) + H(+)(in). With respect to regulation, expression and activity are regulated by acid media by increasing the rate of trafficking to the apical membrane. Inhibited by HOE694 and S3226. In terms of biological role, na(+)/H(+) antiporter. Mediates the electoneutral exchange of intracellular H(+) ions for extracellular Na(+) in 1:1 stoichiometry. Acts as an Na(+)/H(+) exchanger in the trans-Golgi. Contributes to the regulation of pH regulation of Golgi apparatus, and consequently, in protein trafficking and endosomal morphology. In germ cells, plays a crucial role in acrosome biogenesis and sperm development, probably by playing a role in the fusion of the Golgi-derived vesicles that form the acrosomal cap. Can also be active at the cell surface of specialized cells. In the small intestine, at the cell membrane, plays a major physiological role in transepithelial absorption of Na(+) and regulates intracellular pH homeostasis of intestinal epithelial cells. Acts as an important regulator of mucosal integrity in the intestine and in the stomach, could mediate the pH fluctuation necessary for mucin exocytosis or assist membrane trafficking of other proteins. Plays a role in photoreceptor survival and in the maintenance of intracellular pH homeostasis in retinal pigment epithelium (RPE cells). The protein is Sodium/hydrogen exchanger 8 (Slc9a8) of Rattus norvegicus (Rat).